The sequence spans 494 residues: E3 ubiquitin-protein ligase ari-1.1 (494 aa).

The segment covering 1–30 has biased composition (acidic residues); it reads MSSDDEINMDDSDSSQGEIDDGCMSDDDGI. Residues 1–52 form a disordered region; sequence MSSDDEINMDDSDSSQGEIDDGCMSDDDGIVLESREQNSSDYKDNGEPDNEV. The segment covering 33–52 has biased composition (basic and acidic residues); sequence ESREQNSSDYKDNGEPDNEV. Residues 124 to 331 are TRIAD supradomain; it reads GDAECDICCS…SSWYSCNRFD (208 aa). 18 residues coordinate Zn(2+): Cys128, Cys131, Cys142, His144, Cys147, Cys150, Cys169, Cys174, Cys214, Cys219, Cys235, Cys237, Cys242, Cys245, His250, Cys255, Cys282, and Cys285. The RING-type 1 zinc finger occupies 128-174; it reads CDICCSLGELSGLSCNHRACTQCWKAYLTNKIANNAQSEIECMAPNC. The segment at 194–255 adopts an IBR-type zinc-finger fold; the sequence is ATYRKLIVAS…GHDWHEPVNC (62 aa). The RING-type 2; atypical zinc-finger motif lies at 282–313; it reads CPKCMITIEKDGGCNHMTCKNTACRFEFCWMC. The active site involves Cys295. Residues Cys300, Cys305, Cys310, Cys313, His320, and Cys327 each coordinate Zn(2+). The interval 346–494 is ariadne domain; that stretch reads RANLQRYLFY…ADQELWVFNE (149 aa).

The protein belongs to the RBR family. Ariadne subfamily. In terms of assembly, interacts with ubiquitin-conjugating enzyme E2 ubc-18.

The protein resides in the nucleus. It localises to the cytoplasm. It catalyses the reaction [E2 ubiquitin-conjugating enzyme]-S-ubiquitinyl-L-cysteine + [acceptor protein]-L-lysine = [E2 ubiquitin-conjugating enzyme]-L-cysteine + [acceptor protein]-N(6)-ubiquitinyl-L-lysine.. Autoinhibited by the ariadne domain, which masks the second RING-type zinc finger that contains the active site and inhibits the E3 activity. In terms of biological role, E3 ubiquitin-protein transferase, which catalyzes ubiquitination of target proteins together with ubiquitin-conjugating enzyme E2 ubc-18. Acts with ubc-18 to regulate pharyngeal development. This Caenorhabditis elegans protein is E3 ubiquitin-protein ligase ari-1.1.